Consider the following 268-residue polypeptide: uncharacterized protein (268 aa).

To yeast YKR075c.

This is an uncharacterized protein from Saccharomyces cerevisiae (strain ATCC 204508 / S288c) (Baker's yeast).